The sequence spans 162 residues: Lymphocyte antigen 86 (162 aa).

Residues 1 to 20 form the signal peptide; the sequence is MKGFTATLFLWTLIFPSCSG. Disulfide bonds link cysteine 33-cysteine 58, cysteine 45-cysteine 154, and cysteine 102-cysteine 112. N-linked (GlcNAc...) asparagine glycosylation occurs at asparagine 96. The N-linked (GlcNAc...) asparagine glycan is linked to asparagine 156.

M-shaped tetramer of two CD180-LY86 heterodimers. As to expression, highly expressed in B-cells, monocytes and tonsil.

The protein resides in the secreted. Its subcellular location is the extracellular space. In terms of biological role, may cooperate with CD180 and TLR4 to mediate the innate immune response to bacterial lipopolysaccharide (LPS) and cytokine production. Important for efficient CD180 cell surface expression. The sequence is that of Lymphocyte antigen 86 (LY86) from Homo sapiens (Human).